The chain runs to 228 residues: MPASLTWHDVIGQEKEQPYFKETLAYVAAERNAGKTIYPAQHDVFNAFRLTELDQVKVVILGQDPYHGPNQAHGLSFSVLPGVPAPPSLVNIYKELATDIPGFQRPNHGFLQSWAEQGVLLLNTVLTVEAGNAHSHANLGWETFTDKVIAALNEHRDGVIFMLWGAHAQKKGRIIDTQRHFILKAPHPSPLSAHRGFLGCKHFSQANQLLQQHGQQPIDWQPKLPTAE.

Asp-64 serves as the catalytic Proton acceptor.

This sequence belongs to the uracil-DNA glycosylase (UDG) superfamily. UNG family.

The protein resides in the cytoplasm. It catalyses the reaction Hydrolyzes single-stranded DNA or mismatched double-stranded DNA and polynucleotides, releasing free uracil.. Excises uracil residues from the DNA which can arise as a result of misincorporation of dUMP residues by DNA polymerase or due to deamination of cytosine. In Yersinia enterocolitica serotype O:8 / biotype 1B (strain NCTC 13174 / 8081), this protein is Uracil-DNA glycosylase.